An 89-amino-acid chain; its full sequence is Small ribosomal subunit protein uS15 (89 aa).

The protein belongs to the universal ribosomal protein uS15 family. As to quaternary structure, part of the 30S ribosomal subunit. Forms a bridge to the 50S subunit in the 70S ribosome, contacting the 23S rRNA.

Its function is as follows. One of the primary rRNA binding proteins, it binds directly to 16S rRNA where it helps nucleate assembly of the platform of the 30S subunit by binding and bridging several RNA helices of the 16S rRNA. Functionally, forms an intersubunit bridge (bridge B4) with the 23S rRNA of the 50S subunit in the ribosome. This Caulobacter vibrioides (strain NA1000 / CB15N) (Caulobacter crescentus) protein is Small ribosomal subunit protein uS15.